A 580-amino-acid chain; its full sequence is MFAGLQDLGVANGEDLKETLTNCTEPLKAIEQFQTENGVLLPSLQSALPFLDLHGTPRLEFHQSVFDELRDKLLERVSAIASEGKAEERYKKLEDLLEKSFSLVKMPSLQPVVMCVMKHLPKVPEKKLKLVMADKELYRACAVEVKRQIWQDNQALFGDEVSPLLKQYILEKESALFSTELSVLHNFFSPSPKTRRQGEVVQRLTRMVGKNVKLYDMVLQFLRTLFLRTRNVHYCTLRAELLMSLHDLDVGEICTVDPCHKFTWCLDACIRERFVDSKRARELQGFLDGVKKGQEQVLGDLSMILCDPFAINTLALSTVRHLQELVGQETLPRDSPDLLLLLRLLALGQGAWDMIDSQVFKEPKMEVELITRFLPMLMSFLVDDYTFNVDQKLPAEEKAPVSYPNTLPESFTKFLQEQRMACEVGLYYVLHITKQRNKNALLRLLPGLVETFGDLAFGDIFLHLLTGNLALLADEFALEDFCSSLFDGFFLTASPRKENVHRHALRLLIHLHPRVAPSKLEALQKALEPTGQSGEAVKELYSQLGEKLEQLDHRKPSPAQAAETPALELPLPSVPAPAPL.

An N6-acetyllysine modification is found at Lys519. The segment at 548 to 580 is disordered; the sequence is LEQLDHRKPSPAQAAETPALELPLPSVPAPAPL. Ser557 bears the Phosphoserine mark.

This sequence belongs to the NELF-B family. The NELF complex is composed of NELFA, NELFB, NELFCD (isoform NELF-C or isoform NELF-D) and NELFE; the N-terminus of NELFB binds to the NELFA:NELFCD subcomplex. Binds RNA which may help to stabilize the NELF complex on nucleic acid. Interacts with the first BRCT repeat of BRCA1. Interacts with KIAA1191. Interacts with NELFE. In terms of tissue distribution, widely expressed. Expressed in heart, brain, lung, placenta, liver, skeletal muscle, kidney and pancreas.

It localises to the nucleus. In terms of biological role, essential component of the NELF complex, a complex that negatively regulates the elongation of transcription by RNA polymerase II. The NELF complex, which acts via an association with the DSIF complex and causes transcriptional pausing, is counteracted by the P-TEFb kinase complex. May be able to induce chromatin unfolding. Essential for early embryogenesis; plays an important role in maintaining the undifferentiated state of embryonic stem cells (ESCs) by preventing unscheduled expression of developmental genes. Plays a key role in establishing the responsiveness of stem cells to developmental cues; facilitates plasticity and cell fate commitment in ESCs by establishing the appropriate expression level of signaling molecules. Supports the transcription of genes involved in energy metabolism in cardiomyocytes; facilitates the association of transcription initiation factors with the promoters of the metabolism-related genes. Functionally, (Microbial infection) The NELF complex is involved in HIV-1 latency possibly involving recruitment of PCF11 to paused RNA polymerase II. In vitro, binds weakly to the HIV-1 TAR RNA which is located in the long terminal repeat (LTR) of HIV-1. The protein is Negative elongation factor B (NELFB) of Homo sapiens (Human).